A 478-amino-acid chain; its full sequence is MKLLFIAAEGAPFAKTGGLGDVIGALPKSLAKNGNEIAVILPYYDVIDQQFGNQVKDLFYFYTNVGWRHQYVGIKEMIRDNVTFYFIDNRDYFFRGHIYGDWDDGERFAYFQLAALEAMEKINFIPDVLHVHDYHTAMIPFLLKEKYHWIQAYQKIRTVFTIHNIEFQGQFGPGMLGDLFGVGLERYEDGTLRWNNCLNWMKAGVLYADRVTTVSPSYANEIQTVAFGKGLDQVMRMESGKLSGIVNGIDTELYNPENDPHVTFPFSINDLSGKAKNKKELQEQLGLPVNENIPLIGIVSRLTDQKGFDILVSELESILQQDLQMVVLGTGYQQYEEAFRWFANCYPEKLSANITFDIGLAQKIYASSDMFLMPSAFEPCGLSQMMAMRYGTLPIVHEIGGLKDTVEPFNPFDKTGTGFGFNHFSGFWMTNTLLFALDIFHNHKEDWQAIQKNAMSADFSWDTASLAYEKLYMDLKLF.

Lysine 15 contacts ADP-alpha-D-glucose.

It belongs to the glycosyltransferase 1 family. Bacterial/plant glycogen synthase subfamily.

The enzyme catalyses [(1-&gt;4)-alpha-D-glucosyl](n) + ADP-alpha-D-glucose = [(1-&gt;4)-alpha-D-glucosyl](n+1) + ADP + H(+). Its pathway is glycan biosynthesis; glycogen biosynthesis. Functionally, synthesizes alpha-1,4-glucan chains using ADP-glucose. This is Glycogen synthase from Streptococcus uberis (strain ATCC BAA-854 / 0140J).